Reading from the N-terminus, the 36-residue chain is uncharacterized protein (36 aa).

This is an uncharacterized protein from Escherichia coli (strain K12).